We begin with the raw amino-acid sequence, 278 residues long: Tryptophan synthase alpha chain (278 aa).

Residues E49 and D60 each act as proton acceptor in the active site.

This sequence belongs to the TrpA family. In terms of assembly, tetramer of two alpha and two beta chains.

The catalysed reaction is (1S,2R)-1-C-(indol-3-yl)glycerol 3-phosphate + L-serine = D-glyceraldehyde 3-phosphate + L-tryptophan + H2O. The protein operates within amino-acid biosynthesis; L-tryptophan biosynthesis; L-tryptophan from chorismate: step 5/5. In terms of biological role, the alpha subunit is responsible for the aldol cleavage of indoleglycerol phosphate to indole and glyceraldehyde 3-phosphate. This chain is Tryptophan synthase alpha chain, found in Rhodopirellula baltica (strain DSM 10527 / NCIMB 13988 / SH1).